Reading from the N-terminus, the 259-residue chain is Dihydroorotate dehydrogenase B (NAD(+)), electron transfer subunit (259 aa).

In terms of domain architecture, FAD-binding FR-type spans 2–102 (MQKQNMIVVN…LGPLGHGFPV (101 aa)). FAD-binding positions include 53–56 (RPIS), 70–72 (LYR), and 77–78 (GT). The [2Fe-2S] cluster site is built by C221, C226, C229, and C246.

Belongs to the PyrK family. As to quaternary structure, heterotetramer of 2 PyrK and 2 PyrD type B subunits. [2Fe-2S] cluster serves as cofactor. The cofactor is FAD.

Its pathway is pyrimidine metabolism; UMP biosynthesis via de novo pathway; orotate from (S)-dihydroorotate (NAD(+) route): step 1/1. In terms of biological role, responsible for channeling the electrons from the oxidation of dihydroorotate from the FMN redox center in the PyrD type B subunit to the ultimate electron acceptor NAD(+). The sequence is that of Dihydroorotate dehydrogenase B (NAD(+)), electron transfer subunit from Bacillus cereus (strain Q1).